The following is a 310-amino-acid chain: Putative RING-H2 finger protein ATL53 (310 aa).

Residues 62-82 (VIAIFGIFATAFLLAAYYTLV) traverse the membrane as a helical segment. Residues 155-197 (CSICLGEFNEDESLRLLPKCNHTFHVVCIDRWLKSHSNCPLCR) form an RING-type; atypical zinc finger.

The protein belongs to the RING-type zinc finger family. ATL subfamily.

Its subcellular location is the membrane. The catalysed reaction is S-ubiquitinyl-[E2 ubiquitin-conjugating enzyme]-L-cysteine + [acceptor protein]-L-lysine = [E2 ubiquitin-conjugating enzyme]-L-cysteine + N(6)-ubiquitinyl-[acceptor protein]-L-lysine.. Its pathway is protein modification; protein ubiquitination. The polypeptide is Putative RING-H2 finger protein ATL53 (ATL53) (Arabidopsis thaliana (Mouse-ear cress)).